We begin with the raw amino-acid sequence, 119 residues long: Large ribosomal subunit protein bL20 (119 aa).

It belongs to the bacterial ribosomal protein bL20 family.

Its function is as follows. Binds directly to 23S ribosomal RNA and is necessary for the in vitro assembly process of the 50S ribosomal subunit. It is not involved in the protein synthesizing functions of that subunit. The chain is Large ribosomal subunit protein bL20 from Rhodopseudomonas palustris (strain BisA53).